Here is a 491-residue protein sequence, read N- to C-terminus: 3-octaprenyl-4-hydroxybenzoate carboxy-lyase (491 aa).

Position 176 (N176) interacts with Mn(2+). Prenylated FMN is bound by residues 179 to 181 (IYR), 193 to 195 (RWL), and 198 to 199 (RG). Mn(2+) is bound at residue E242. The active-site Proton donor is the D291.

This sequence belongs to the UbiD family. Homohexamer. Prenylated FMN is required as a cofactor. The cofactor is Mn(2+).

Its subcellular location is the cell membrane. It catalyses the reaction a 4-hydroxy-3-(all-trans-polyprenyl)benzoate + H(+) = a 2-(all-trans-polyprenyl)phenol + CO2. The protein operates within cofactor biosynthesis; ubiquinone biosynthesis. In terms of biological role, catalyzes the decarboxylation of 3-octaprenyl-4-hydroxy benzoate to 2-octaprenylphenol, an intermediate step in ubiquinone biosynthesis. The polypeptide is 3-octaprenyl-4-hydroxybenzoate carboxy-lyase (Chromobacterium violaceum (strain ATCC 12472 / DSM 30191 / JCM 1249 / CCUG 213 / NBRC 12614 / NCIMB 9131 / NCTC 9757 / MK)).